Consider the following 66-residue polypeptide: COP-associated protein (66 aa).

The HMA domain occupies 1–66; it reads MKATFQVPSI…ALLDAGQEVV (66 aa). Residues C12 and C15 each coordinate Cu cation. C12 and C15 are oxidised to a cystine.

Part of a cation-transporting system which is associated with copper export out of the H.pylori cells. This chain is COP-associated protein (copP), found in Helicobacter pylori (strain ATCC 700392 / 26695) (Campylobacter pylori).